The chain runs to 341 residues: Platelet-activating factor receptor (341 aa).

Topologically, residues 1-16 (MEQNGSFRVDSEFRYT) are extracellular. N-linked (GlcNAc...) asparagine glycosylation is present at N4. A helical membrane pass occupies residues 17 to 38 (LFPIVYSVIFVLGVVANGYVLW). Topologically, residues 39–54 (VFATLYPSKKLNEIKI) are cytoplasmic. Residues 55-74 (FMVNLTVADLLFLMTLPLWI) traverse the membrane as a helical segment. The Extracellular segment spans residues 75-91 (VYYSNEGDWIVHKFLCN). C90 and C173 are oxidised to a cystine. A helical membrane pass occupies residues 92–113 (LAGCLFFINTYCSVAFLGVITY). Residues 114-133 (NRYQAVAYPIKTAQATTRKR) are Cytoplasmic-facing. Residues 134–155 (GITLSLVIWISIAATASYFLAT) traverse the membrane as a helical segment. The Extracellular portion of the chain corresponds to 156 to 184 (DSTNVVPKKDGSGNITRCFEHYEPYSVPI). The N-linked (GlcNAc...) asparagine glycan is linked to N169. Residues 185–205 (LVVHIFITSCFFLVFFLIFYC) traverse the membrane as a helical segment. Residues 206-233 (NMVIIHTLLTRPVRQQRKPEVKRRALWM) are Cytoplasmic-facing. The chain crosses the membrane as a helical span at residues 234 to 254 (VCTVLAVFVICFVPHHVVQLP). Residues 255–275 (WTLAELGYQTNFHQAINDAHQ) lie on the Extracellular side of the membrane. The chain crosses the membrane as a helical span at residues 276-295 (ITLCLLSTNCVLDPVIYCFL). Residues 296–341 (TKKFRKHLSEKFYSMRSSRKCSRATSDTCTEVMMPANQTPVLPLKN) lie on the Cytoplasmic side of the membrane.

The protein belongs to the G-protein coupled receptor 1 family. As to quaternary structure, interacts with ARRB1. As to expression, present in almost all organs including spleen, small intestine, kidney, lung, liver and brain.

It localises to the cell membrane. Its function is as follows. Receptor for platelet activating factor, a chemotactic phospholipid mediator that possesses potent inflammatory, smooth-muscle contractile and hypotensive activity. Seems to mediate its action via a G protein that activates a phosphatidylinositol-calcium second messenger system. This is Platelet-activating factor receptor (Ptafr) from Rattus norvegicus (Rat).